Consider the following 466-residue polypeptide: Methylenetetrahydrofolate--tRNA-(uracil-5-)-methyltransferase TrmFO (466 aa).

Residue 10-15 (GGGLAG) coordinates FAD.

It belongs to the MnmG family. TrmFO subfamily. FAD is required as a cofactor.

The protein resides in the cytoplasm. It carries out the reaction uridine(54) in tRNA + (6R)-5,10-methylene-5,6,7,8-tetrahydrofolate + NADH + H(+) = 5-methyluridine(54) in tRNA + (6S)-5,6,7,8-tetrahydrofolate + NAD(+). The catalysed reaction is uridine(54) in tRNA + (6R)-5,10-methylene-5,6,7,8-tetrahydrofolate + NADPH + H(+) = 5-methyluridine(54) in tRNA + (6S)-5,6,7,8-tetrahydrofolate + NADP(+). Catalyzes the folate-dependent formation of 5-methyl-uridine at position 54 (M-5-U54) in all tRNAs. This Phenylobacterium zucineum (strain HLK1) protein is Methylenetetrahydrofolate--tRNA-(uracil-5-)-methyltransferase TrmFO.